A 294-amino-acid polypeptide reads, in one-letter code: C-type lectin domain family 4 member G (294 aa).

The Cytoplasmic portion of the chain corresponds to 1-30; sequence MNTGEYNKLGSAIEEVSRGQLGRWECYKQR. A helical; Signal-anchor for type II membrane protein membrane pass occupies residues 31–51; it reads LFFLVLALLVATVLWALILST. The Extracellular portion of the chain corresponds to 52–294; that stretch reads LLSSASSKLR…WICEKRSSCY (243 aa). The N-linked (GlcNAc...) asparagine glycan is linked to Asn73. Positions 100-151 form a coiled coil; the sequence is AQLQTTLAEFKDIQAKLMEQESILKELQERVTQDLAKASRDRENIRSELFQA. Residues Asn159, Asn246, and Asn256 are each glycosylated (N-linked (GlcNAc...) asparagine). The region spanning 172 to 287 is the C-type lectin domain; that stretch reads FQGSCYYFSE…CTNERDGWIC (116 aa). Cysteines 264 and 278 form a disulfide.

It is found in the cell membrane. Binds mannose, N-acetylglucosamine (GlcNAc) and fucose, but not galactose, in a Ca(2+)-dependent manner. In Mus musculus (Mouse), this protein is C-type lectin domain family 4 member G (Clec4g).